The chain runs to 476 residues: Ribulose bisphosphate carboxylase large chain (476 aa).

Substrate-binding residues include asparagine 116 and threonine 166. Catalysis depends on lysine 168, which acts as the Proton acceptor. Residue lysine 170 participates in substrate binding. Residues lysine 194, aspartate 196, and glutamate 197 each contribute to the Mg(2+) site. Lysine 194 carries the post-translational modification N6-carboxylysine. Residue histidine 286 is the Proton acceptor of the active site. Substrate-binding residues include arginine 287, histidine 319, and serine 371.

This sequence belongs to the RuBisCO large chain family. Type I subfamily. In terms of assembly, heterohexadecamer of 8 large chains and 8 small chains. Mg(2+) serves as cofactor.

The catalysed reaction is 2 (2R)-3-phosphoglycerate + 2 H(+) = D-ribulose 1,5-bisphosphate + CO2 + H2O. The enzyme catalyses D-ribulose 1,5-bisphosphate + O2 = 2-phosphoglycolate + (2R)-3-phosphoglycerate + 2 H(+). RuBisCO catalyzes two reactions: the carboxylation of D-ribulose 1,5-bisphosphate, the primary event in carbon dioxide fixation, as well as the oxidative fragmentation of the pentose substrate. Both reactions occur simultaneously and in competition at the same active site. The chain is Ribulose bisphosphate carboxylase large chain from Pseudonocardia dioxanivorans (strain ATCC 55486 / DSM 44775 / JCM 13855 / CB1190).